The following is a 154-amino-acid chain: Jupiter microtubule associated homolog 1 (154 aa).

An N-acetylmethionine modification is found at M1. Polar residues predominate over residues 1–19 (MTTTTTFKGVDPNSRNSSR). The segment at 1–154 (MTTTTTFKGV…PGGKSSLVLG (154 aa)) is disordered. At T2 the chain carries N-acetylthreonine; in Hematological and neurological expressed 1 protein, N-terminally processed. A phosphoserine mark is found at S28 and S31. Residues 47 to 59 (MASNIFGTPEENQ) show a composition bias toward polar residues. T54 carries the phosphothreonine modification. A compositionally biased stretch (low complexity) spans 60 to 71 (ASWAKSAGAKSS). A phosphoserine mark is found at S71, S80, S87, S88, and S92. A compositionally biased stretch (polar residues) spans 80 to 91 (SGLQRRNSSEAS). The span at 96-108 (LDLKGEGDIHENV) shows a compositional bias: basic and acidic residues. A compositionally biased stretch (pro residues) spans 125 to 138 (PAAPVPSPVAPAPV). S131 is subject to Phosphoserine. N6-acetyllysine is present on K148.

Belongs to the JUPITER family. Interacts with the complex composed, at least, of APC, CTNNB1 and GSK3B; the interaction takes place with the inactive form of GSK3B (phosphorylated at 'Ser-9'). In terms of tissue distribution, expressed in testis, skeletal muscle, thymus, prostate, colon, peripheral blood cells, brain and placenta.

The protein resides in the nucleus. Its subcellular location is the cytoplasm. In terms of biological role, modulates negatively AKT-mediated GSK3B signaling. Induces CTNNB1 'Ser-33' phosphorylation and degradation through the suppression of the inhibitory 'Ser-9' phosphorylation of GSK3B, which represses the function of the APC:CTNNB1:GSK3B complex and the interaction with CDH1/E-cadherin in adherent junctions. Plays a role in the regulation of cell cycle and cell adhesion. Has an inhibitory role on AR-signaling pathway through the induction of receptor proteasomal degradation. The chain is Jupiter microtubule associated homolog 1 from Homo sapiens (Human).